Here is a 124-residue protein sequence, read N- to C-terminus: Translation initiation factor 5A (124 aa).

A Hypusine modification is found at lysine 36.

This sequence belongs to the eIF-5A family.

It localises to the cytoplasm. In terms of biological role, functions by promoting the formation of the first peptide bond. This Haloquadratum walsbyi (strain DSM 16790 / HBSQ001) protein is Translation initiation factor 5A.